A 154-amino-acid chain; its full sequence is SsrA-binding protein (154 aa).

This sequence belongs to the SmpB family.

It localises to the cytoplasm. Required for rescue of stalled ribosomes mediated by trans-translation. Binds to transfer-messenger RNA (tmRNA), required for stable association of tmRNA with ribosomes. tmRNA and SmpB together mimic tRNA shape, replacing the anticodon stem-loop with SmpB. tmRNA is encoded by the ssrA gene; the 2 termini fold to resemble tRNA(Ala) and it encodes a 'tag peptide', a short internal open reading frame. During trans-translation Ala-aminoacylated tmRNA acts like a tRNA, entering the A-site of stalled ribosomes, displacing the stalled mRNA. The ribosome then switches to translate the ORF on the tmRNA; the nascent peptide is terminated with the 'tag peptide' encoded by the tmRNA and targeted for degradation. The ribosome is freed to recommence translation, which seems to be the essential function of trans-translation. In Ruminiclostridium cellulolyticum (strain ATCC 35319 / DSM 5812 / JCM 6584 / H10) (Clostridium cellulolyticum), this protein is SsrA-binding protein.